A 306-amino-acid polypeptide reads, in one-letter code: D-alanine--D-alanine ligase (306 aa).

The region spanning 107-300 is the ATP-grasp domain; the sequence is KAAYRTAGLP…FGQLCAWLVE (194 aa). 134-184 is an ATP binding site; that stretch reads IAPPYVVKPNNEGSSVGIYIVHEATNSPPQLSEEMPAQVMVEAYAPGREMT. Residues Asp-251, Glu-267, and Asn-269 each coordinate Mg(2+).

This sequence belongs to the D-alanine--D-alanine ligase family. Requires Mg(2+) as cofactor. Mn(2+) is required as a cofactor.

It localises to the cytoplasm. The catalysed reaction is 2 D-alanine + ATP = D-alanyl-D-alanine + ADP + phosphate + H(+). It participates in cell wall biogenesis; peptidoglycan biosynthesis. Functionally, cell wall formation. This chain is D-alanine--D-alanine ligase, found in Ruegeria sp. (strain TM1040) (Silicibacter sp.).